The primary structure comprises 251 residues: Homeobox protein notochord (251 aa).

Over residues 1–14 the composition is skewed to pro residues; that stretch reads MPSPRPRGSPPPAP. The segment at 1-47 is disordered; that stretch reads MPSPRPRGSPPPAPSGSRVRPPRSGRSPAPRSPTGPNTPRAPGRFES. The span at 15–35 shows a compositional bias: low complexity; sequence SGSRVRPPRSGRSPAPRSPTG. The homeobox DNA-binding region spans 156–215; sequence QKRVRTMFNLEQLEELEKVFAKQHNLVGKKRAQLAARLKLTENQVRVWFQNRRVKYQKQQ. Low complexity predominate over residues 224 to 242; that stretch reads AEAASLDEPSSSSIASIQS. The tract at residues 224-251 is disordered; sequence AEAASLDEPSSSSIASIQSDDAESGVDG.

The protein localises to the nucleus. Functionally, transcription regulator acting downstream of both FOXA2 and Brachyury (T) during notochord development. Required for node morphogenesis. Is essential for cilia formation in the posterior notochord (PNC) and for left-right patterning; acts upstream of FOXJ1 and RFX3 in this process and is required for the expression of various components important for axonemal assembly and function. Plays a role in regulating axial versus paraxial cell fate. Activates the transcription of ciliary proteins C11orf97 homolog, FAM183B and SPACA9 in the embryonic ventral node. In Homo sapiens (Human), this protein is Homeobox protein notochord (NOTO).